Reading from the N-terminus, the 309-residue chain is Porphobilinogen deaminase (309 aa).

Cys-244 carries the S-(dipyrrolylmethanemethyl)cysteine modification.

It belongs to the HMBS family. In terms of assembly, monomer. The cofactor is dipyrromethane.

The catalysed reaction is 4 porphobilinogen + H2O = hydroxymethylbilane + 4 NH4(+). It functions in the pathway porphyrin-containing compound metabolism; protoporphyrin-IX biosynthesis; coproporphyrinogen-III from 5-aminolevulinate: step 2/4. Functionally, tetrapolymerization of the monopyrrole PBG into the hydroxymethylbilane pre-uroporphyrinogen in several discrete steps. In Listeria monocytogenes serotype 4a (strain HCC23), this protein is Porphobilinogen deaminase.